A 410-amino-acid chain; its full sequence is Peptidase T (410 aa).

His-79 contacts Zn(2+). The active site involves Asp-81. Asp-142 serves as a coordination point for Zn(2+). Glu-176 (proton acceptor) is an active-site residue. Zn(2+) contacts are provided by Glu-177, Asp-199, and His-381.

This sequence belongs to the peptidase M20B family. Requires Zn(2+) as cofactor.

It localises to the cytoplasm. It carries out the reaction Release of the N-terminal residue from a tripeptide.. In terms of biological role, cleaves the N-terminal amino acid of tripeptides. The protein is Peptidase T of Listeria monocytogenes serotype 4b (strain F2365).